The sequence spans 195 residues: Small ribosomal subunit protein eS1 (195 aa).

It belongs to the eukaryotic ribosomal protein eS1 family.

The chain is Small ribosomal subunit protein eS1 from Methanothermobacter thermautotrophicus (strain ATCC 29096 / DSM 1053 / JCM 10044 / NBRC 100330 / Delta H) (Methanobacterium thermoautotrophicum).